The sequence spans 275 residues: Large ribosomal subunit protein uL2 (275 aa).

A disordered region spans residues 208-275; that stretch reads AGAKRWRGRR…NMIIRDRRKK (68 aa). Composition is skewed to basic residues over residues 209–219 and 254–263; these read GAKRWRGRRPT and KGYKTRRNKR.

The protein belongs to the universal ribosomal protein uL2 family. As to quaternary structure, part of the 50S ribosomal subunit. Forms a bridge to the 30S subunit in the 70S ribosome.

In terms of biological role, one of the primary rRNA binding proteins. Required for association of the 30S and 50S subunits to form the 70S ribosome, for tRNA binding and peptide bond formation. It has been suggested to have peptidyltransferase activity; this is somewhat controversial. Makes several contacts with the 16S rRNA in the 70S ribosome. The sequence is that of Large ribosomal subunit protein uL2 from Coxiella burnetii (strain CbuK_Q154) (Coxiella burnetii (strain Q154)).